The sequence spans 131 residues: UPF0102 protein RPD_0400 (131 aa).

Belongs to the UPF0102 family.

The sequence is that of UPF0102 protein RPD_0400 from Rhodopseudomonas palustris (strain BisB5).